A 79-amino-acid chain; its full sequence is Conotoxin Tr6.2 (79 aa).

An N-terminal signal peptide occupies residues methionine 1 to alanine 22. The propeptide occupies valine 23 to arginine 47. 3 cysteine pairs are disulfide-bonded: cysteine 49/cysteine 62, cysteine 56/cysteine 67, and cysteine 61/cysteine 77. Residues proline 60 and proline 63 each carry the 4-hydroxyproline modification.

Belongs to the conotoxin O1 superfamily. In terms of tissue distribution, expressed by the venom duct.

The protein localises to the secreted. In terms of biological role, ion channel inhibitor that inhibits the increase in intracellular calcium upon depolarization in DRG neurons. In vivo, both intraperitoneal and intracranial injections into mice induce hyperactivity. In Conus terebra (Sea snail), this protein is Conotoxin Tr6.2.